The sequence spans 433 residues: Probable phosphoglucosamine mutase (433 aa).

The active-site Phosphoserine intermediate is the serine 91. 4 residues coordinate Mg(2+): serine 91, aspartate 229, aspartate 231, and aspartate 233. A Phosphoserine modification is found at serine 91.

It belongs to the phosphohexose mutase family. It depends on Mg(2+) as a cofactor. In terms of processing, activated by phosphorylation.

The catalysed reaction is alpha-D-glucosamine 1-phosphate = D-glucosamine 6-phosphate. Catalyzes the conversion of glucosamine-6-phosphate to glucosamine-1-phosphate. The polypeptide is Probable phosphoglucosamine mutase (Methanococcoides burtonii (strain DSM 6242 / NBRC 107633 / OCM 468 / ACE-M)).